Reading from the N-terminus, the 497-residue chain is Guanosine-5'-triphosphate,3'-diphosphate pyrophosphatase (497 aa).

The protein belongs to the GppA/Ppx family. GppA subfamily.

The enzyme catalyses guanosine 3'-diphosphate 5'-triphosphate + H2O = guanosine 3',5'-bis(diphosphate) + phosphate + H(+). The protein operates within purine metabolism; ppGpp biosynthesis; ppGpp from GTP: step 2/2. Its function is as follows. Catalyzes the conversion of pppGpp to ppGpp. Guanosine pentaphosphate (pppGpp) is a cytoplasmic signaling molecule which together with ppGpp controls the 'stringent response', an adaptive process that allows bacteria to respond to amino acid starvation, resulting in the coordinated regulation of numerous cellular activities. This Photobacterium profundum (strain SS9) protein is Guanosine-5'-triphosphate,3'-diphosphate pyrophosphatase.